Reading from the N-terminus, the 226-residue chain is Ribonuclease 3 (226 aa).

In terms of domain architecture, RNase III spans I6–D128. E41 provides a ligand contact to Mg(2+). D45 is an active-site residue. Mg(2+)-binding residues include D114 and E117. E117 is an active-site residue. The 71-residue stretch at D155 to L225 folds into the DRBM domain.

This sequence belongs to the ribonuclease III family. In terms of assembly, homodimer. Requires Mg(2+) as cofactor.

The protein resides in the cytoplasm. It catalyses the reaction Endonucleolytic cleavage to 5'-phosphomonoester.. Functionally, digests double-stranded RNA. Involved in the processing of primary rRNA transcript to yield the immediate precursors to the large and small rRNAs (23S and 16S). Processes some mRNAs, and tRNAs when they are encoded in the rRNA operon. Processes pre-crRNA and tracrRNA of type II CRISPR loci if present in the organism. This chain is Ribonuclease 3 (rnc), found in Pantoea ananatis (strain LMG 20103).